The sequence spans 292 residues: ATP synthase gamma chain (292 aa).

The protein belongs to the ATPase gamma chain family. As to quaternary structure, F-type ATPases have 2 components, CF(1) - the catalytic core - and CF(0) - the membrane proton channel. CF(1) has five subunits: alpha(3), beta(3), gamma(1), delta(1), epsilon(1). CF(0) has three main subunits: a, b and c.

It is found in the cell inner membrane. Functionally, produces ATP from ADP in the presence of a proton gradient across the membrane. The gamma chain is believed to be important in regulating ATPase activity and the flow of protons through the CF(0) complex. The sequence is that of ATP synthase gamma chain from Nitrobacter winogradskyi (strain ATCC 25391 / DSM 10237 / CIP 104748 / NCIMB 11846 / Nb-255).